We begin with the raw amino-acid sequence, 559 residues long: MATALSEEELDNEDYYSLLNVRREASSEELKAAYRRLCMLYHPDKHRDPELKSQAERLFNLVHQAYEVLSDPQTRAIYDIYGKRGLEMEGWEVVERRRTPAEIREEFERLQREREERRLQQRTNPKGTISVGVDATDLFDRYDEEYEDVSGSSFPQIEINKMHISQSIEAPLTATDTAILSGSLSTQNGNGGGSINFALRRVTSAKGWGELEFGAGDLQGPLFGLKLFRNLTPRCFVTTNCALQFSSRGIRPGLTTVLARNLDKNTVGYLQWRWGIQSAMNTSIVRDTKTSHFTVALQLGIPHSFALISYQHKFQDDDQTRVKGSLKAGFFGTVVEYGAERKISRHSVLGAAVSIGVPQGVSLKVKLNRASQTYFFPIHLTDQLLPSAVFYATMGPLVVYFAMHRLIIKPYLRAQKEKELEKQRESAATDVLQKKQEAESAVRLMQESVRRIIEAEESRMGLIIVNAWYGKFVNDKSRKSEKVKVIDVTVPLQCLVKDSKLILTEASKAGLPGFYDPCVGEEKNLKVLYQFRGVLHQVMVLDSEALRIPKQSHRIDTDG.

Alanine 2 bears the N-acetylalanine mark. A J domain is found at 14–82 (DYYSLLNVRR…QTRAIYDIYG (69 aa)). Phosphoserine is present on serine 204. Residues 417 to 457 (EKELEKQRESAATDVLQKKQEAESAVRLMQESVRRIIEAEE) adopt a coiled-coil conformation.

It belongs to the DNAJC11 family. Associates with the mitochondrial contact site and cristae organizing system (MICOS) complex, composed of at least MICOS10/MIC10, CHCHD3/MIC19, CHCHD6/MIC25, APOOL/MIC27, IMMT/MIC60, APOO/MIC23/MIC26 and QIL1/MIC13. This complex was also known under the names MINOS or MitOS complex. The MICOS complex associates with mitochondrial outer membrane proteins SAMM50, MTX1 and MTX2 (together described as components of the mitochondrial outer membrane sorting assembly machinery (SAM) complex) and DNAJC11, mitochondrial inner membrane protein TMEM11 and with HSPA9. The MICOS and SAM complexes together with DNAJC11 are part of a large protein complex spanning both membranes termed the mitochondrial intermembrane space bridging (MIB) complex.

It localises to the mitochondrion. It is found in the mitochondrion outer membrane. Its function is as follows. Required for mitochondrial inner membrane organization. Seems to function through its association with the MICOS complex and the mitochondrial outer membrane sorting assembly machinery (SAM) complex. The chain is DnaJ homolog subfamily C member 11 (DNAJC11) from Pongo abelii (Sumatran orangutan).